A 389-amino-acid polypeptide reads, in one-letter code: GTPase Obg (389 aa).

Positions 1–159 constitute an Obg domain; the sequence is MKFVDEAVIR…RSLKLELLLL (159 aa). Residues 160–333 form the OBG-type G domain; the sequence is ADVGLLGMPN…LALKLLDYIA (174 aa). GTP is bound by residues 166–173, 191–195, 213–216, 283–286, and 314–316; these read GMPNAGKS, FTTLV, DIPG, NKTD, and SAY. Mg(2+) is bound by residues serine 173 and threonine 193.

Belongs to the TRAFAC class OBG-HflX-like GTPase superfamily. OBG GTPase family. In terms of assembly, monomer. Mg(2+) is required as a cofactor.

It localises to the cytoplasm. An essential GTPase which binds GTP, GDP and possibly (p)ppGpp with moderate affinity, with high nucleotide exchange rates and a fairly low GTP hydrolysis rate. Plays a role in control of the cell cycle, stress response, ribosome biogenesis and in those bacteria that undergo differentiation, in morphogenesis control. This Shewanella baltica (strain OS223) protein is GTPase Obg.